The chain runs to 443 residues: Deoxyguanosinetriphosphate triphosphohydrolase-like protein (443 aa).

The 186-residue stretch at 61–246 (RLTHSLEVAC…MEAADDICYG (186 aa)) folds into the HD domain.

Belongs to the dGTPase family. Type 3 subfamily.

This Pseudomonas aeruginosa (strain LESB58) protein is Deoxyguanosinetriphosphate triphosphohydrolase-like protein.